Here is a 292-residue protein sequence, read N- to C-terminus: Elongation factor Ts (292 aa).

The involved in Mg(2+) ion dislocation from EF-Tu stretch occupies residues 82–85; the sequence is TDFV.

It belongs to the EF-Ts family.

The protein localises to the cytoplasm. Functionally, associates with the EF-Tu.GDP complex and induces the exchange of GDP to GTP. It remains bound to the aminoacyl-tRNA.EF-Tu.GTP complex up to the GTP hydrolysis stage on the ribosome. The sequence is that of Elongation factor Ts from Legionella pneumophila subsp. pneumophila (strain Philadelphia 1 / ATCC 33152 / DSM 7513).